The following is a 136-amino-acid chain: Psoriasis susceptibility 1 candidate gene 2 protein homolog (136 aa).

Positions 1 to 22 (MILNWKLLGILVLCLHTRGISG) are cleaved as a signal peptide. Residues 20–136 (ISGSEDHPSH…DLDPPREEYR (117 aa)) are disordered. The span at 23-33 (SEDHPSHPPAE) shows a compositional bias: basic and acidic residues. 2 stretches are compositionally biased toward pro residues: residues 44–74 (PQGPPVPGDPWPGAPPLFEDPPPPHPSPPWR) and 83–116 (PPEPPRTDPPQPPRPDDPWPAGPQPPENPWPPAP). Residues 117–136 (EVDHRPQEEPDLDPPREEYR) show a composition bias toward basic and acidic residues.

The protein localises to the secreted. In Pan troglodytes (Chimpanzee), this protein is Psoriasis susceptibility 1 candidate gene 2 protein homolog (PSORS1C2).